The sequence spans 392 residues: Probable protein phosphatase 2C 22 (392 aa).

A disordered region spans residues 1 to 26; sequence MEETRGISDPENGSSSYGGKPPNPLS. One can recognise a PPM-type phosphatase domain in the interval 89-356; the sequence is RSGAWSDIGS…DNVTAVVVCL (268 aa). Residues D133, G134, D304, and D347 each coordinate Mn(2+).

This sequence belongs to the PP2C family. Mg(2+) is required as a cofactor. It depends on Mn(2+) as a cofactor.

The enzyme catalyses O-phospho-L-seryl-[protein] + H2O = L-seryl-[protein] + phosphate. It carries out the reaction O-phospho-L-threonyl-[protein] + H2O = L-threonyl-[protein] + phosphate. The chain is Probable protein phosphatase 2C 22 from Arabidopsis thaliana (Mouse-ear cress).